Reading from the N-terminus, the 121-residue chain is Small ribosomal subunit protein uS13 (121 aa).

Positions 97 to 121 (PVRGQKTHSNARTRKGPRASRIKKK) are disordered. A compositionally biased stretch (basic residues) spans 101 to 121 (QKTHSNARTRKGPRASRIKKK).

The protein belongs to the universal ribosomal protein uS13 family. In terms of assembly, part of the 30S ribosomal subunit. Forms a loose heterodimer with protein S19. Forms two bridges to the 50S subunit in the 70S ribosome.

Its function is as follows. Located at the top of the head of the 30S subunit, it contacts several helices of the 16S rRNA. In the 70S ribosome it contacts the 23S rRNA (bridge B1a) and protein L5 of the 50S subunit (bridge B1b), connecting the 2 subunits; these bridges are implicated in subunit movement. Contacts the tRNAs in the A and P-sites. In Kosmotoga olearia (strain ATCC BAA-1733 / DSM 21960 / TBF 19.5.1), this protein is Small ribosomal subunit protein uS13.